The sequence spans 362 residues: Somatostatin receptor type 5 (362 aa).

Over residues 1–10 (MEPLSLTSTP) the composition is skewed to polar residues. The interval 1-24 (MEPLSLTSTPSWNASAASSSSHNW) is disordered. The Extracellular portion of the chain corresponds to 1–35 (MEPLSLTSTPSWNASAASSSSHNWSLVDPVSPMGA). Over residues 11–24 (SWNASAASSSSHNW) the composition is skewed to low complexity. 2 N-linked (GlcNAc...) asparagine glycosylation sites follow: Asn-13 and Asn-23. The helical transmembrane segment at 36 to 63 (RAVLVPVLYLLVCTVGLGGNTLVIYVVL) threads the bilayer. At 64 to 73 (RYAKMKTVTN) the chain is on the cytoplasmic side. Residues 74–99 (VYILNLAVADVLFMLGLPFLATQNAV) form a helical membrane-spanning segment. Topologically, residues 100–110 (SYWPFGSFLCR) are extracellular. Cys-109 and Cys-184 are joined by a disulfide. Residues 111–132 (LVMTLDGINQFTSIFCLMVMSV) traverse the membrane as a helical segment. Residues 133-154 (DRYLAVVHPLRSARWRRPRVAK) lie on the Cytoplasmic side of the membrane. Residues 155–175 (LASAAVWVFSLLMSLPLLVFA) form a helical membrane-spanning segment. Topologically, residues 176 to 195 (DVQEGWGTCNLSWPEPVGLW) are extracellular. An N-linked (GlcNAc...) asparagine glycan is attached at Asn-185. A helical membrane pass occupies residues 196–220 (GAAFITYTSVLGFFGPLLVICLCYL). Residues 221–246 (LIVVKVKAAGMRVGSSRRRRSERKVT) lie on the Cytoplasmic side of the membrane. The chain crosses the membrane as a helical span at residues 247 to 272 (RMVVVVVLVFVGCWLPFFIVNIVNLA). Over 273–282 (FTLPEEPTSA) the chain is Extracellular. Residues 283–307 (GLYFFVVVLSYANSCANPLLYGFLS) traverse the membrane as a helical segment. The Cytoplasmic portion of the chain corresponds to 308 to 362 (DNFRQSFRKALCLRRGYGVEDADAIEPRPDKSGRPQTTLPTRSCEANGLMQTSRL). Cys-319 carries the S-palmitoyl cysteine; by ZDHHC5 lipid modification. The segment at 330-362 (DAIEPRPDKSGRPQTTLPTRSCEANGLMQTSRL) is disordered.

It belongs to the G-protein coupled receptor 1 family. In terms of assembly, heterodimer with SSTR2. Heterodimerization with SSTR2 increases cell growth inhibition activity of SSTR2. In terms of processing, palmitoylated at Cys-319 by ZDHHC5, but not ZDHHC8. Palmitoylation creates an additional intracellular loop which is thought to be important for efficient coupling to G-proteins and may target the protein to lipid rafts. In terms of tissue distribution, expressed in adult brain but not in liver, heart, spleen, or kidney.

The protein resides in the cell membrane. Functionally, receptor for somatostatin-28. The activity of this receptor is mediated by G proteins which inhibit adenylyl cyclase. Increases cell growth inhibition activity of SSTR2 following heterodimerization. The sequence is that of Somatostatin receptor type 5 (Sstr5) from Mus musculus (Mouse).